Consider the following 157-residue polypeptide: Cuticle protein 19 (157 aa).

6 tandem repeats follow at residues 11–14 (AAPA), 18–21 (AAPA), 24–27 (AAPA), 29–32 (AAPA), 39–42 (AAPA), and 47–50 (AAPA). The Chitin-binding type R&amp;R domain occupies 56–127 (YPKYAFEYGV…SGPSAHPAPA (72 aa)). Repeat 7 spans residues 141–144 (AAPA).

Its function is as follows. Component of the cuticle of migratory locust which contains more than 100 different structural proteins. The polypeptide is Cuticle protein 19 (Locusta migratoria (Migratory locust)).